A 475-amino-acid polypeptide reads, in one-letter code: MKYISTRGQSPALSFSEILLGGLAPDGGLYLPEQYPQFSADALSAMRGMNYRDLAFTILSRLIDDIPADDLRIIVDKTYRADVYAYARPGQDAEDITPTYKLEDDLYLLSLSNGPTLAFKDMAMQLLGNLFEYVLAQKGETTNILGATSGDTGSAAEYAMRGKQGVKVFMLSPHQKMSRFQTAQMFSLQDDNIFNIAVKGVFDDCQDIVKAVSNDHAFKAKNKIGAVNSINWARVAAQVVYYFKGYFAVTADNAQQVSFAVPSGNFGNVCAGHIARMMGLPIAKLVVATNENDVLDEFFKTGVYRPRGSANTYHTSSPSMDISKASNFERFVFDLVGRDAAKVRELWGKVDAGGSFDLNDGGWFAKVADYGFVSGSSNHANRMQTIKATHERYGVTIDTHTADGLKVALEHREAGTPMLVLETALPAKFEDAIVEALGHKPERPHSLEGLESLPQRFEVMEADAAVIKQFIVEHI.

Lys120 is subject to N6-(pyridoxal phosphate)lysine.

It belongs to the threonine synthase family. Pyridoxal 5'-phosphate is required as a cofactor.

The enzyme catalyses O-phospho-L-homoserine + H2O = L-threonine + phosphate. It participates in amino-acid biosynthesis; L-threonine biosynthesis; L-threonine from L-aspartate: step 5/5. In terms of biological role, catalyzes the gamma-elimination of phosphate from L-phosphohomoserine and the beta-addition of water to produce L-threonine. This is Threonine synthase (thrC) from Methylobacillus glycogenes.